The sequence spans 472 residues: 3-isopropylmalate dehydratase large subunit (472 aa).

[4Fe-4S] cluster is bound by residues C353, C414, and C417.

The protein belongs to the aconitase/IPM isomerase family. LeuC type 1 subfamily. Heterodimer of LeuC and LeuD. The cofactor is [4Fe-4S] cluster.

The catalysed reaction is (2R,3S)-3-isopropylmalate = (2S)-2-isopropylmalate. Its pathway is amino-acid biosynthesis; L-leucine biosynthesis; L-leucine from 3-methyl-2-oxobutanoate: step 2/4. Catalyzes the isomerization between 2-isopropylmalate and 3-isopropylmalate, via the formation of 2-isopropylmaleate. This is 3-isopropylmalate dehydratase large subunit from Acinetobacter baumannii (strain ATCC 17978 / DSM 105126 / CIP 53.77 / LMG 1025 / NCDC KC755 / 5377).